A 446-amino-acid chain; its full sequence is Transcription factor Sox-10 (446 aa).

Disordered regions lie at residues 1–60, 153–191, and 203–264; these read MSDD…SEDE, RLRM…AEGG, and HLDH…IDFG. Acidic residues predominate over residues 36 to 48; sequence DDDDDDDEEEEEE. Lys52 is covalently cross-linked (Glycyl lysine isopeptide (Lys-Gly) (interchain with G-Cter in SUMO)). The tract at residues 56–96 is dimerization (DIM); that stretch reads DSEDERFPVCIREAVSQVLNGYDWTLVPMPVRVNGGSKSKP. The HMG box DNA-binding region spans 98–166; that stretch reads VKRPMNAFMV…QHKKDHPDYK (69 aa). The span at 153-167 shows a compositional bias: basic and acidic residues; sequence RLRMQHKKDHPDYKY. Residues 213-226 are compositionally biased toward polar residues; the sequence is SDGNSEHSTGQSHG. The transactivation domain (TAM) stretch occupies residues 217 to 303; sequence SEHSTGQSHG…NGHAGHPSHI (87 aa). The segment covering 243–257 has biased composition (basic and acidic residues); sequence SDGKRDGSHALREGG. The transactivation domain (TAC) stretch occupies residues 337 to 446; the sequence is KAQVKTESSS…QPVYTTLSRP (110 aa). Lys341 is covalently cross-linked (Glycyl lysine isopeptide (Lys-Gly) (interchain with G-Cter in SUMO)). The disordered stretch occupies residues 421–446; sequence SDPPSVAQSHSPTHWEQPVYTTLSRP. A compositionally biased stretch (polar residues) spans 426–446; that stretch reads VAQSHSPTHWEQPVYTTLSRP.

Interacts with the sumoylation factors ube2i/ubc9 and sumo1. Post-translationally, sumoylated. First expressed at stages 13/14 at the lateral edges of the neural plate, in the neural crest forming region. By stage 22, neural crest cells migrate in the cranial region and strong expression is seen in the crest cells that populate the branchial arches as well as those migrating in the frontonasal region. Also strongly expressed in the trunk neural crest. Expression in the otic vesicle begins around stage 25 and persists until at least stage 40. At stage 30, expression is down-regulated in the cranial neural crest of the pharyngeal arches but persists in the trunk neural crest, in the otic vesicle and in discrete domains adjacent to the hindbrain. At stage 40, expression is restricted to the otic vesicle, differentiated pigment cells, and in several cranial ganglia.

Its subcellular location is the cytoplasm. It localises to the nucleus. Functionally, acts early in neural crest formation, functioning redundantly with the other group E Sox factors sox8 and sox9 to induce neural crest progenitors. Acts downstream of wnt-signaling at the neural plate border. Involved in the specification of neural crest progenitors fated to form the pigment cell lineage. The polypeptide is Transcription factor Sox-10 (sox10) (Xenopus laevis (African clawed frog)).